Here is a 72-residue protein sequence, read N- to C-terminus: Translation initiation factor IF-1 (72 aa).

Positions 1 to 72 (MAKSDVIEVE…SKGRITYRFK (72 aa)) constitute an S1-like domain.

The protein belongs to the IF-1 family. In terms of assembly, component of the 30S ribosomal translation pre-initiation complex which assembles on the 30S ribosome in the order IF-2 and IF-3, IF-1 and N-formylmethionyl-tRNA(fMet); mRNA recruitment can occur at any time during PIC assembly.

It localises to the cytoplasm. Functionally, one of the essential components for the initiation of protein synthesis. Stabilizes the binding of IF-2 and IF-3 on the 30S subunit to which N-formylmethionyl-tRNA(fMet) subsequently binds. Helps modulate mRNA selection, yielding the 30S pre-initiation complex (PIC). Upon addition of the 50S ribosomal subunit IF-1, IF-2 and IF-3 are released leaving the mature 70S translation initiation complex. The protein is Translation initiation factor IF-1 of Levilactobacillus brevis (strain ATCC 367 / BCRC 12310 / CIP 105137 / JCM 1170 / LMG 11437 / NCIMB 947 / NCTC 947) (Lactobacillus brevis).